The chain runs to 87 residues: Defensin-like protein 223 (87 aa).

The signal sequence occupies residues 1–34 (MKSTIFVLTLLIFVSLYFNIIVYVSFSFIGTSEI). Disulfide bonds link Cys55–Cys72, Cys58–Cys77, and Cys62–Cys79.

This sequence belongs to the DEFL family.

It is found in the secreted. This is Defensin-like protein 223 from Arabidopsis thaliana (Mouse-ear cress).